Here is a 372-residue protein sequence, read N- to C-terminus: Serine/threonine-protein kinase 17B (372 aa).

The Protein kinase domain occupies 33–293; sequence ILTSKELGRG…AEICLSHSWL (261 aa). ATP-binding positions include 39 to 47 and Lys-62; that span reads LGRGKFAVV. The Proton acceptor role is filled by Asp-158. The tract at residues 305-362 is disordered; that stretch reads EETSSSSQTQDHSVRSSEDKTSKSSCNGTCGDREDKENIPEDSSMVSKRFRFDDSLPN. Basic and acidic residues predominate over residues 316–326; the sequence is HSVRSSEDKTS.

The protein belongs to the protein kinase superfamily. CAMK Ser/Thr protein kinase family. DAP kinase subfamily. Interacts with CHP1; the interaction induces CHP1 to translocate from the Golgi to the nucleus. Post-translationally, autophosphorylated. In terms of tissue distribution, highly expressed in placenta, lung, pancreas. Lower levels in heart, brain, liver, skeletal muscle and kidney.

Its subcellular location is the nucleus. It is found in the cell membrane. The protein resides in the endoplasmic reticulum-Golgi intermediate compartment. It catalyses the reaction L-seryl-[protein] + ATP = O-phospho-L-seryl-[protein] + ADP + H(+). The catalysed reaction is L-threonyl-[protein] + ATP = O-phospho-L-threonyl-[protein] + ADP + H(+). In terms of biological role, phosphorylates myosin light chains. Acts as a positive regulator of apoptosis. The polypeptide is Serine/threonine-protein kinase 17B (STK17B) (Homo sapiens (Human)).